The sequence spans 179 residues: MTPRRKSRMTVILFVLLGISIASALVLYALRQNIDLFYTPTEVVYGKNEDATQKPSVGQRIRVGGMVVAGTVERDPKSLKVKFDLNDIGPSISVEYEGILPDLFREGQGIVAQGVLKTPTLLEATEVLAKHDENYVPPELDAQMQKVHKPMGVADLKGESERDRQEKAYQKTSMQEGQK.

The Cytoplasmic segment spans residues 1-8 (MTPRRKSR). A helical; Signal-anchor for type II membrane protein membrane pass occupies residues 9–29 (MTVILFVLLGISIASALVLYA). At 30 to 179 (LRQNIDLFYT…QKTSMQEGQK (150 aa)) the chain is on the periplasmic side. Residues His131 and Tyr135 each coordinate heme. The tract at residues 151–179 (MGVADLKGESERDRQEKAYQKTSMQEGQK) is disordered. A compositionally biased stretch (basic and acidic residues) spans 156–169 (LKGESERDRQEKAY). Positions 170–179 (QKTSMQEGQK) are enriched in polar residues.

The protein belongs to the CcmE/CycJ family.

It localises to the cell inner membrane. Its function is as follows. Heme chaperone required for the biogenesis of c-type cytochromes. Transiently binds heme delivered by CcmC and transfers the heme to apo-cytochromes in a process facilitated by CcmF and CcmH. This is Cytochrome c-type biogenesis protein CcmE from Pasteurella multocida (strain Pm70).